The chain runs to 201 residues: Probable GTP-binding protein EngB (201 aa).

The EngB-type G domain occupies T23–M196. GTP is bound by residues G31–S38, G58–M62, D76–G79, T143–D146, and Y175–A177. The Mg(2+) site is built by S38 and T60.

This sequence belongs to the TRAFAC class TrmE-Era-EngA-EngB-Septin-like GTPase superfamily. EngB GTPase family. The cofactor is Mg(2+).

In terms of biological role, necessary for normal cell division and for the maintenance of normal septation. The sequence is that of Probable GTP-binding protein EngB from Desulfitobacterium hafniense (strain DSM 10664 / DCB-2).